The primary structure comprises 265 residues: 4-hydroxy-2-oxo-heptane-1,7-dioate aldolase (265 aa).

The Proton acceptor role is filled by histidine 45. A substrate-binding site is contributed by glutamine 147. Glutamate 149 contacts a divalent metal cation. Residues alanine 174 and aspartate 175 each coordinate substrate. Position 175 (aspartate 175) interacts with a divalent metal cation.

The protein belongs to the HpcH/HpaI aldolase family. In terms of assembly, homohexamer; trimer of dimers. Requires a divalent metal cation as cofactor.

It carries out the reaction 4-hydroxy-2-oxoheptanedioate = succinate semialdehyde + pyruvate. It participates in aromatic compound metabolism; 4-hydroxyphenylacetate degradation; pyruvate and succinate semialdehyde from 4-hydroxyphenylacetate: step 7/7. Its function is as follows. Catalyzes the reversible retro-aldol cleavage of 4-hydroxy-2-ketoheptane-1,7-dioate (HKHD) to pyruvate and succinic semialdehyde. This is 4-hydroxy-2-oxo-heptane-1,7-dioate aldolase from Klebsiella pneumoniae subsp. pneumoniae (strain ATCC 700721 / MGH 78578).